Here is a 211-residue protein sequence, read N- to C-terminus: Regulator of G-protein signaling 2 (211 aa).

2 disordered regions span residues 14 to 33 and 49 to 71; these read GPMDKGAGTGPKNEEKREKM and LQNSSSPGKPKTGKKSKQQTFIK. Positions 32–66 are necessary for membrane association; sequence KMKRTLLKDWKSRLSYFLQNSSSPGKPKTGKKSKQ. Positions 79-116 are necessary to inhibit protein synthesis; it reads LWSEAFDELLASKYGLAAFRAFLKSEFCEENIEFWLAC. The 117-residue stretch at 83 to 199 folds into the RGS domain; that stretch reads AFDELLASKY…LESEFYQDLC (117 aa).

As to quaternary structure, interacts with GNAQ. Does not interact with GNAI1 and GNAI3. Interacts with EIF2B5. Interacts with PRKG1 (isoform alpha). Post-translationally, phosphorylated by protein kinase C. Phosphorylation by PRKG1 leads to activation of RGS2 activity.

It is found in the cell membrane. The protein localises to the cytoplasm. It localises to the nucleus. Its subcellular location is the nucleolus. Regulates G protein-coupled receptor signaling cascades. Inhibits signal transduction by increasing the GTPase activity of G protein alpha subunits, thereby driving them into their inactive GDP-bound form. It is involved in the negative regulation of the angiotensin-activated signaling pathway. Plays a role in the regulation of blood pressure in response to signaling via G protein-coupled receptors and GNAQ. Plays a role in regulating the constriction and relaxation of vascular smooth muscle. Binds EIF2B5 and blocks its activity, thereby inhibiting the translation of mRNA into protein. This chain is Regulator of G-protein signaling 2 (RGS2), found in Bos taurus (Bovine).